An 809-amino-acid chain; its full sequence is Glutamine--tRNA ligase (809 aa).

Residues 185–198 (DLIKKKTKNNEKKK) show a composition bias toward basic and acidic residues. Positions 185–216 (DLIKKKTKNNEKKKTNSAKKSSDNSASSGPKR) are disordered. The 'HIGH' region motif lies at 258 to 268 (PEPNGYLHIGH). ATP-binding positions include 259–261 (EPN) and 265–271 (HIGHSKA). Asp-291 contributes to the L-glutamine binding site. Ser-378 is modified (phosphoserine). Tyr-440 is an L-glutamine binding site. Residues Thr-459, 488 to 489 (RL), and 496 to 498 (LSK) contribute to the ATP site. A 'KMSKS' region motif is present at residues 495 to 499 (VLSKR).

Belongs to the class-I aminoacyl-tRNA synthetase family.

The catalysed reaction is tRNA(Gln) + L-glutamine + ATP = L-glutaminyl-tRNA(Gln) + AMP + diphosphate. The sequence is that of Glutamine--tRNA ligase (GLN4) from Saccharomyces cerevisiae (strain ATCC 204508 / S288c) (Baker's yeast).